The following is a 556-amino-acid chain: Cytochrome P450 monooxygenase polC (556 aa).

Residues leucine 17–tyrosine 37 traverse the membrane as a helical segment. Residue cysteine 479 coordinates heme.

Belongs to the cytochrome P450 family. Requires heme as cofactor.

It is found in the membrane. It carries out the reaction motiol + 3 reduced [NADPH--hemoprotein reductase] + 3 O2 = 4beta-carboxyl motiol + 3 oxidized [NADPH--hemoprotein reductase] + 4 H2O + 4 H(+). The protein operates within secondary metabolite biosynthesis; terpenoid biosynthesis. Its function is as follows. Cytochrome P450 monooxygenase; part of the gene cluster that mediates the biosynthesis of antifungal fernane-type triterpenoid polytolypin. PolC uses motiol as a substrate and converts the methyl group at position C-4 to a carboxyl group. Within the pathway, the triterpene cyclase polA first catalyzes the cyclization of 2,3-oxidosqualene to motiol, polC converts the 4-alpha-methyl group of motiol to a carboxyl group, polB is responsible for appending a hydroxyl group at the 2-alpha position and polE is a dual functional P450, which can catalyze the formation of both the 1-beta-hydroxyl group and 10-beta-carboxyl group. In Polytolypa hystricis (strain UAMH7299), this protein is Cytochrome P450 monooxygenase polC.